We begin with the raw amino-acid sequence, 99 residues long: Nucleoid-associated protein EbfC (99 aa).

It belongs to the YbaB/EbfC family. As to quaternary structure, homodimer.

The protein localises to the cytoplasm. It is found in the nucleoid. Functionally, binds to DNA and alters its conformation. May be involved in regulation of gene expression, nucleoid organization and DNA protection. The protein is Nucleoid-associated protein EbfC of Borreliella afzelii (strain PKo) (Borrelia afzelii).